The primary structure comprises 427 residues: Glutamate-1-semialdehyde 2,1-aminomutase (427 aa).

An N6-(pyridoxal phosphate)lysine modification is found at Lys265.

It belongs to the class-III pyridoxal-phosphate-dependent aminotransferase family. HemL subfamily. In terms of assembly, homodimer. Requires pyridoxal 5'-phosphate as cofactor.

Its subcellular location is the cytoplasm. It carries out the reaction (S)-4-amino-5-oxopentanoate = 5-aminolevulinate. It functions in the pathway porphyrin-containing compound metabolism; protoporphyrin-IX biosynthesis; 5-aminolevulinate from L-glutamyl-tRNA(Glu): step 2/2. The polypeptide is Glutamate-1-semialdehyde 2,1-aminomutase (Burkholderia multivorans (strain ATCC 17616 / 249)).